The primary structure comprises 94 residues: ESAT-6-like protein EsxL (94 aa).

Belongs to the WXG100 family. ESAT-6 subfamily. As to quaternary structure, strongly interacts with EsxK to form a heterodimeric complex under reducing conditions. The complex is regulated by the redox state of EsxL.

It is found in the secreted. In terms of biological role, induces apoptosis of host cells. Is immunogenic with highly specific seroreactivity towards TB patients' serum. The protein is ESAT-6-like protein EsxL of Mycobacterium tuberculosis (strain ATCC 25618 / H37Rv).